A 273-amino-acid chain; its full sequence is Suppressor protein STM1 (273 aa).

Residues 1-153 (MSNPFDLLGN…PKTAQLSLQD (153 aa)) form a disordered region. Serine 2 carries the post-translational modification N-acetylserine. Serine 32, serine 41, and serine 45 each carry phosphoserine; by MTOR. Lysine 46 participates in a covalent cross-link: Glycyl lysine isopeptide (Lys-Gly) (interchain with G-Cter in ubiquitin). Serine 55 and serine 73 each carry phosphoserine; by MTOR. Serine 55 carries the post-translational modification Phosphoserine. Basic and acidic residues-rich tracts occupy residues 60–77 (AIRD…KDVT), 89–104 (RATD…DTKK), and 111–124 (GDDK…KEAQ). Serine 118 bears the Phosphoserine mark. Glycyl lysine isopeptide (Lys-Gly) (interchain with G-Cter in ubiquitin) cross-links involve residues lysine 121 and lysine 171. Position 181 is a phosphothreonine; by MTOR (threonine 181). Lysine 184 participates in a covalent cross-link: Glycyl lysine isopeptide (Lys-Gly) (interchain with G-Cter in ubiquitin). At threonine 218 the chain carries Phosphothreonine; by MTOR. Residues 219-273 (RKNFGDRNNNSRNNFNNRRGGRGARKGNNTANATNSANTVQKNRNIDVSNLPSLA) are disordered. 2 stretches are compositionally biased toward low complexity: residues 224 to 236 (DRNN…FNNR) and 244 to 257 (KGNN…SANT). Serine 229 carries the post-translational modification Phosphoserine. A compositionally biased stretch (polar residues) spans 258–273 (VQKNRNIDVSNLPSLA).

This sequence belongs to the SERBP1-HABP4 family. As to quaternary structure, associates with mature 80S ribosomes. Binds to the head domain of the 40S ribosomal subunit and prevents mRNA binding by inserting its alpha-helix domain towards the mRNA entry tunnel at the decoding site, where it blocks the binding of tRNA and mRNA at the A- and P-sites. Interacts with EFT1; interaction sequesters EFT1 at the A-site of the ribosome, thereby blocking the interaction sites of the mRNA-tRNA complex, promoting ribosome stabilization and hibernation. Interacts with CDC13. Associates with the telomere-proximal Y' element. Phosphorylation by TORC1 upon nutrient replenishment inhibits STM1 and causes its release from dormant ribosomes.

It is found in the cytoplasm. The protein resides in the nucleus. The protein localises to the perinuclear region. Functionally, ribosome preservation factor that protect a small pool of nontranslating, vacant ribosomes in cells under nutrient starvation conditions. Under nutrient-limiting conditions, cells reduce ribosome biogenesis and degrade ribosomes via autophagy (ribophagy) or proteasomal degradation. To avoid excessive degradation during starvation, STM1 binds to and protects 80S ribosomes from proteasomal degradation. Under nutrient-sufficient conditions, TORC1 phosphorylates and inhibits STM1 to prevent formation of dormant 80S ribosomes. Acts as an inhibitor of mRNA translation by promoting ribosome hibernation: clamps the two ribosomal subunits, thereby preventing their dissociation, and inhibits translation by excluding mRNA-binding. Acts via its association with eEF2 (EFT1), promoting ribosome stabilization and storage in an inactive state. May also repress translation by preventing association of eEF3 (YEF3 and HEF3) with ribosomes. Binds specifically G4 quadruplex (these are four-stranded right-handed helices, stabilized by guanine base quartets) and purine motif triplex (characterized by a third, antiparallel purine-rich DNA strand located within the major groove of a homopurine stretch of duplex DNA) nucleic acid structures. These structures may be present at telomeres or in rRNAs. Acts with CDC13 to control telomere length homeostasis. Involved in the control of the apoptosis-like cell death. The chain is Suppressor protein STM1 from Saccharomyces cerevisiae (strain ATCC 204508 / S288c) (Baker's yeast).